The primary structure comprises 267 residues: Hydroxynaphthalene reductase-like protein Arp2 (267 aa).

Isoleucine 25, asparagine 45, aspartate 71, and asparagine 98 together coordinate NADP(+). Catalysis depends on proton donor residues serine 147 and serine 148. Tyrosine 162, lysine 166, valine 195, and threonine 197 together coordinate NADP(+). Tyrosine 162 (proton acceptor) is an active-site residue. Residue lysine 166 is the Lowers pKa of active site Tyr of the active site.

The protein belongs to the short-chain dehydrogenases/reductases (SDR) family.

Its function is as follows. Hydroxynaphthalene reductase-like protein; part of the Pks2 gene cluster that mediates the formation of infectious structures (appressoria), enabling these fungi to kill insects faster. The product of the Pks2 gene cluster is different from the one of Pks1 and has still not been identified. This is Hydroxynaphthalene reductase-like protein Arp2 from Metarhizium brunneum (strain ARSEF 3297).